Here is a 421-residue protein sequence, read N- to C-terminus: Leucine-rich repeat-containing protein 42 (421 aa).

LRR repeat units lie at residues 149–170, 174–195, 202–222, 234–255, and 259–280; these read VLCSLCLRNRYLVVAEKLEEIK, ELTRLDLSCCWLGDEHELLEHL, SVTQLHLKDNCLSDAGIRKMT, NLALLDLSCNPEITDAGIGYLF, and KLNCLDISGTGLKDIKAVKDKL. The tract at residues 376 to 406 is disordered; it reads PLLSQESKKSKKRAFKESEQEQSSPQSAKQK. Low complexity predominate over residues 396–406; sequence EQSSPQSAKQK. A Phosphoserine modification is found at serine 399.

This sequence belongs to the LRRC42 family.

In Mus musculus (Mouse), this protein is Leucine-rich repeat-containing protein 42 (Lrrc42).